The sequence spans 280 residues: 3-methyl-2-oxobutanoate hydroxymethyltransferase (280 aa).

Mg(2+) is bound by residues D49 and D88. 3-methyl-2-oxobutanoate-binding positions include 49–50, D88, and K118; that span reads DS. E120 contributes to the Mg(2+) binding site. The Proton acceptor role is filled by E187.

It belongs to the PanB family. Homodecamer; pentamer of dimers. The cofactor is Mg(2+).

It is found in the cytoplasm. The catalysed reaction is 3-methyl-2-oxobutanoate + (6R)-5,10-methylene-5,6,7,8-tetrahydrofolate + H2O = 2-dehydropantoate + (6S)-5,6,7,8-tetrahydrofolate. The protein operates within cofactor biosynthesis; (R)-pantothenate biosynthesis; (R)-pantoate from 3-methyl-2-oxobutanoate: step 1/2. In terms of biological role, catalyzes the reversible reaction in which hydroxymethyl group from 5,10-methylenetetrahydrofolate is transferred onto alpha-ketoisovalerate to form ketopantoate. This is 3-methyl-2-oxobutanoate hydroxymethyltransferase from Xanthobacter autotrophicus (strain ATCC BAA-1158 / Py2).